We begin with the raw amino-acid sequence, 84 residues long: Small ribosomal subunit protein bS18A (84 aa).

This sequence belongs to the bacterial ribosomal protein bS18 family. In terms of assembly, part of the 30S ribosomal subunit. Forms a tight heterodimer with protein bS6.

Functionally, binds as a heterodimer with protein bS6 to the central domain of the 16S rRNA, where it helps stabilize the platform of the 30S subunit. This Mycolicibacterium paratuberculosis (strain ATCC BAA-968 / K-10) (Mycobacterium paratuberculosis) protein is Small ribosomal subunit protein bS18A.